Reading from the N-terminus, the 412-residue chain is MLRYWGEIPIPSGQTNRSSFDLLPREFRLVEVHDPPLHQPSANKPKPPTMLDIPSEPCSLTIHTIQLIQHNRRLRSLIATAQTQSQQQTEGVKAEESEPLPSCPGSPPLPDDLQPLDCKNPNAPFQIRHSDPESDFYRGKGEPVTELSWHSCRQLLYQAVATILAHTGFECANESVLETLTDVAHEYCLKFTKLLRFAVDREALLGQTPFPDVMEQVFHEVGIGSVLSLQKFWQHRIKDYHTYMLQISKQLSEEYERIVNPEKATEDTKPVKIKEEPVSDITFPVSEELEADLASGDQSLPIGVLGAQSERFPSNLEVEASPQAPSAEVNASPLWNLAHVKMEPQESEEGNVSAHGVLGSDVFEEPMSGMSEAGLPQSPDDSDSSYGSHSTDSLMGSSPVFNQRCRKRMRKI.

Residues 81-107 (AQTQSQQQTEGVKAEESEPLPSCPGSP) form a disordered region. Serine 106 carries the phosphoserine modification. Lysine 269 is covalently cross-linked (Glycyl lysine isopeptide (Lys-Gly) (interchain with G-Cter in SUMO2)). Serine 321 and serine 332 each carry phosphoserine. Residues 364–412 (EEPMSGMSEAGLPQSPDDSDSSYGSHSTDSLMGSSPVFNQRCRKRMRKI) form a disordered region. A compositionally biased stretch (low complexity) spans 384-393 (SSYGSHSTDS).

As to quaternary structure, component of the STAGA transcription coactivator-HAT complex, at least composed of SUPT3H, SUPT7L, GCN5L2, TAF5L, TAF6L, TADA3L, TAD1L, TAF10, TAF12 and TAF9. Post-translationally, sumoylated.

The protein localises to the nucleus. This is STAGA complex 65 subunit gamma (Supt7l) from Mus musculus (Mouse).